A 325-amino-acid chain; its full sequence is DNA-directed RNA polymerase subunit alpha (325 aa).

An alpha N-terminal domain (alpha-NTD) region spans residues 1–238 (MSPKNLLKGF…DHLTVFINFE (238 aa)). The tract at residues 255–325 (LKAALSKHVE…MGLSFGMRDF (71 aa)) is alpha C-terminal domain (alpha-CTD).

Belongs to the RNA polymerase alpha chain family. In terms of assembly, homodimer. The RNAP catalytic core consists of 2 alpha, 1 beta, 1 beta' and 1 omega subunit. When a sigma factor is associated with the core the holoenzyme is formed, which can initiate transcription.

The enzyme catalyses RNA(n) + a ribonucleoside 5'-triphosphate = RNA(n+1) + diphosphate. DNA-dependent RNA polymerase catalyzes the transcription of DNA into RNA using the four ribonucleoside triphosphates as substrates. This chain is DNA-directed RNA polymerase subunit alpha, found in Leptospira biflexa serovar Patoc (strain Patoc 1 / Ames).